A 542-amino-acid chain; its full sequence is N-substituted formamide deformylase (542 aa).

Positions 1–2 are excised as a propeptide; it reads MT.

In terms of assembly, homodimer. Requires Zn(2+) as cofactor.

The catalysed reaction is N-benzylformamide + H2O = benzylamine + formate. With respect to regulation, completely inhibited by HgCl(2), CuCl, CuCl(2) and AgNO(3). Partially inhibited by ZnCl(2) and SnCl(2). Almost completely inhibited by the reducing reagent DTT. Partially inhibited by phenylhydrazine. Moderately inhibited by phenanthroline and 8-hydroxyquinoline. Completely inhibited by the thiol-specific inhibitors N-ethylmaleimide and p-chloromercuribenzoate. Not inhibited by the carbonyl-specific inhibitors aminoguanidine and semicarbazide, the chelating agents alpha,alpha'-dipyridyl, KCN, diethyldithiocarbamate and EDTA, or the oxidizing reagents and serine-modifying reagents such as H(2)O(2), ammonium persulfate, phenylmethanesulfonyl fluoride and diisopropyl fluorophosphates. Its function is as follows. Hydrolyzes N-substituted formamides, but not amides. N-benzylformamide is the preferred substrate, while N-butylformamide is hydrolyzed at a much lower rate. Has very low activity towards allylformamide, N-(2-cyclohex-1-enylethyl)formamide and N-(alpha-methylbenzyl)formamide. This is N-substituted formamide deformylase from Arthrobacter pascens.